The sequence spans 283 residues: Acetyl-coenzyme A carboxylase carboxyl transferase subunit beta (283 aa).

One can recognise a CoA carboxyltransferase N-terminal domain in the interval 29–283; the sequence is LWVACPKCQQ…LKLHERGAHY (255 aa). Residues C33, C36, C51, and C54 each contribute to the Zn(2+) site. A C4-type zinc finger spans residues 33–54; that stretch reads CPKCQQSIYHKDLGYYRTCPVC.

This sequence belongs to the AccD/PCCB family. As to quaternary structure, acetyl-CoA carboxylase is a heterohexamer composed of biotin carboxyl carrier protein (AccB), biotin carboxylase (AccC) and two subunits each of ACCase subunit alpha (AccA) and ACCase subunit beta (AccD). The cofactor is Zn(2+).

It is found in the cytoplasm. The catalysed reaction is N(6)-carboxybiotinyl-L-lysyl-[protein] + acetyl-CoA = N(6)-biotinyl-L-lysyl-[protein] + malonyl-CoA. The protein operates within lipid metabolism; malonyl-CoA biosynthesis; malonyl-CoA from acetyl-CoA: step 1/1. Functionally, component of the acetyl coenzyme A carboxylase (ACC) complex. Biotin carboxylase (BC) catalyzes the carboxylation of biotin on its carrier protein (BCCP) and then the CO(2) group is transferred by the transcarboxylase to acetyl-CoA to form malonyl-CoA. This is Acetyl-coenzyme A carboxylase carboxyl transferase subunit beta from Latilactobacillus sakei subsp. sakei (strain 23K) (Lactobacillus sakei subsp. sakei).